The chain runs to 315 residues: WD repeat domain-containing protein 83 (315 aa).

WD repeat units follow at residues 23 to 62, 65 to 104, 107 to 146, 151 to 188, 189 to 228, 233 to 272, and 275 to 313; these read CQQGAVRAVRFNADGNYLLTCGSDKSLKLWSVSRGTLLKT, GHGYEVLDADGSYDNSQLCSCSSDKTVILWDVASGQVTRK, GHAGKVNCVQFNEEATVMLSGSIDGTVRCWDTRSRRMEPI, ESQDGISSLKVSEHELLTGSVDGRVRRYDLRMGQLQVD, YIGSPITCVCFSRDGQCTLSSSLDSTVRLLDKSTGEMLGE, VNKGYKLDCCLTDKDTHVLSCSEDGHVYYWDLVEGSLTLK, and VGKAVVQSLSFHPTEPRLLTSMEGRVQVWGAEPEDAAEN.

This sequence belongs to the WD repeat MORG1 family.

Its subcellular location is the cytoplasm. Functionally, molecular scaffold protein for various multimeric protein complexes. Acts as a module in the assembly of a multicomponent scaffold for the ERK pathway, linking ERK responses to specific agonists. Also involved in response to hypoxia by acting as a negative regulator of HIF1A/HIF-1-alpha. This Danio rerio (Zebrafish) protein is WD repeat domain-containing protein 83 (wdr83).